A 237-amino-acid chain; its full sequence is Demethylmenaquinone methyltransferase (237 aa).

S-adenosyl-L-methionine-binding positions include Thr62, Asp80, 102-103 (DA), and Ser119.

Belongs to the class I-like SAM-binding methyltransferase superfamily. MenG/UbiE family.

It carries out the reaction a 2-demethylmenaquinol + S-adenosyl-L-methionine = a menaquinol + S-adenosyl-L-homocysteine + H(+). It participates in quinol/quinone metabolism; menaquinone biosynthesis; menaquinol from 1,4-dihydroxy-2-naphthoate: step 2/2. Methyltransferase required for the conversion of demethylmenaquinol (DMKH2) to menaquinol (MKH2). The sequence is that of Demethylmenaquinone methyltransferase from Renibacterium salmoninarum (strain ATCC 33209 / DSM 20767 / JCM 11484 / NBRC 15589 / NCIMB 2235).